The chain runs to 159 residues: Protein-export protein SecB (159 aa).

The protein belongs to the SecB family. In terms of assembly, homotetramer, a dimer of dimers. One homotetramer interacts with 1 SecA dimer.

It is found in the cytoplasm. Functionally, one of the proteins required for the normal export of preproteins out of the cell cytoplasm. It is a molecular chaperone that binds to a subset of precursor proteins, maintaining them in a translocation-competent state. It also specifically binds to its receptor SecA. This is Protein-export protein SecB from Pseudomonas fluorescens (strain SBW25).